A 304-amino-acid polypeptide reads, in one-letter code: Ferredoxin fas2 (304 aa).

Positions 2 to 29 (KVVVNERRCFGSGQCVLVAPEVFEQSND) constitute a 4Fe-4S ferredoxin-type domain. Positions 10, 16, and 54 each coordinate [3Fe-4S] cluster. Residues 66–304 (MRQEPTEFSY…QSARSSIQQR (239 aa)) form a transketolase-like region.

The protein in the C-terminal section; belongs to the transketolase family. Requires [3Fe-4S] cluster as cofactor.

Its function is as follows. Plays a role in electron transfer. The fas operon encodes genes involved in cytokinin production and in host plant fasciation (leafy gall). This Rhodococcoides fascians (Rhodococcus fascians) protein is Ferredoxin fas2 (fas2).